The following is a 467-amino-acid chain: tRNA-2-methylthio-N(6)-dimethylallyladenosine synthase (467 aa).

The MTTase N-terminal domain occupies 22–138 (GSYWITTFGC…LETLLNKVET (117 aa)). Positions 31, 67, 101, 173, 177, and 180 each coordinate [4Fe-4S] cluster. Residues 159 to 396 (RDSSICAWVN…NSLVEIKAKE (238 aa)) form the Radical SAM core domain. Residues 399-467 (VRYKDRVEEV…AFSLSGVIEN (69 aa)) form the TRAM domain.

This sequence belongs to the methylthiotransferase family. MiaB subfamily. Monomer. [4Fe-4S] cluster is required as a cofactor.

It is found in the cytoplasm. It carries out the reaction N(6)-dimethylallyladenosine(37) in tRNA + (sulfur carrier)-SH + AH2 + 2 S-adenosyl-L-methionine = 2-methylsulfanyl-N(6)-dimethylallyladenosine(37) in tRNA + (sulfur carrier)-H + 5'-deoxyadenosine + L-methionine + A + S-adenosyl-L-homocysteine + 2 H(+). Functionally, catalyzes the methylthiolation of N6-(dimethylallyl)adenosine (i(6)A), leading to the formation of 2-methylthio-N6-(dimethylallyl)adenosine (ms(2)i(6)A) at position 37 in tRNAs that read codons beginning with uridine. In Prochlorococcus marinus (strain MIT 9211), this protein is tRNA-2-methylthio-N(6)-dimethylallyladenosine synthase.